Consider the following 354-residue polypeptide: Ornithine transcarbamylase, mitochondrial (354 aa).

The transit peptide at 1–32 (MLSNLRILLNNAALRKGHTSVVRHFWCGKPVQ) directs the protein to the mitochondrion. At Lys70 the chain carries N6-acetyllysine; alternate. N6-succinyllysine; alternate is present on Lys70. Lys80 bears the N6-succinyllysine mark. An N6-acetyllysine; alternate modification is found at Lys88. Lys88 carries the post-translational modification N6-succinyllysine; alternate. Residue 90–94 (STRTR) coordinates carbamoyl phosphate. Ser133 carries the post-translational modification Phosphoserine. Arg141 contributes to the carbamoyl phosphate binding site. Arg141 contributes to the L-ornithine binding site. Lys144 carries the post-translational modification N6-acetyllysine; alternate. N6-succinyllysine; alternate is present on Lys144. His168 is a binding site for carbamoyl phosphate. Asn199 is an L-ornithine binding site. N6-acetyllysine; alternate is present on residues Lys221, Lys231, and Lys238. N6-succinyllysine; alternate is present on residues Lys221, Lys231, and Lys238. Lys243 is subject to N6-acetyllysine. 263–267 (DTWIS) is a binding site for L-ornithine. N6-succinyllysine occurs at positions 274 and 289. An N6-acetyllysine; alternate modification is found at Lys292. Lys292 bears the N6-succinyllysine; alternate mark. 302 to 305 (HCLP) lines the L-ornithine pocket. Residue Cys303 is part of the active site. Lys307 is subject to N6-acetyllysine; alternate. N6-succinyllysine; alternate is present on Lys307. Arg330 lines the carbamoyl phosphate pocket. Arg330 lines the L-ornithine pocket.

The protein belongs to the aspartate/ornithine carbamoyltransferase superfamily. OTCase family. As to quaternary structure, homotrimer. In terms of processing, acetylation at Lys-88 negatively regulates ornithine carbamoyltransferase activity in response to nutrient signals.

The protein resides in the mitochondrion matrix. It carries out the reaction carbamoyl phosphate + L-ornithine = L-citrulline + phosphate + H(+). It participates in nitrogen metabolism; urea cycle; L-citrulline from L-ornithine and carbamoyl phosphate: step 1/1. Negatively regulated by lysine acetylation. Its function is as follows. Catalyzes the second step of the urea cycle, the condensation of carbamoyl phosphate with L-ornithine to form L-citrulline. The urea cycle ensures the detoxification of ammonia by converting it to urea for excretion. This chain is Ornithine transcarbamylase, mitochondrial, found in Mus musculus (Mouse).